The sequence spans 379 residues: MTNTRKNHPLMKIINNSFIDLPTPPNISSLWNFGSLLGACLTIQVITGLFLAMHYTADTTTAFSSVTHICRDVNYGWTIRYLHANGASMFFMCLFIHVGRGLYYGSFALLETWNIGIMLLFSVMATAFMGYVLPWGQMSFWGATVITNLLSAIPYVGTNLVEWIWGGFSVGKPTLTRFFALHFILPFIISALAMIHLLFLHETGSNNPLGMSSNSDKIPFHPYYTTKDFLGLLLLILLLMTLTLFYPDLLGDPDNYTPANPLNTPPHIKPEWYFLFAYAILRSIPNKLGGVVALILSILILAIIPFLQPSKQQTMMFRPLSQFLFWILVADLLTLTWIGGQPVENPFISIGQTASILYFSLMVFIMPMTCLIENKMLKW.

The next 4 membrane-spanning stretches (helical) occupy residues 33–53 (FGSL…FLAM), 77–98 (WTIR…FIHV), 113–133 (WNIG…GYVL), and 178–198 (FFAL…IHLL). Positions 83 and 97 each coordinate heme b. Residues His182 and His196 each coordinate heme b. His201 lines the a ubiquinone pocket. 4 consecutive transmembrane segments (helical) span residues 226-246 (TKDF…TLFY), 288-308 (LGGV…PFLQ), 320-340 (LSQF…WIGG), and 347-367 (FISI…FIMP).

Belongs to the cytochrome b family. In terms of assembly, the cytochrome bc1 complex contains 11 subunits: 3 respiratory subunits (MT-CYB, CYC1 and UQCRFS1), 2 core proteins (UQCRC1 and UQCRC2) and 6 low-molecular weight proteins (UQCRH/QCR6, UQCRB/QCR7, UQCRQ/QCR8, UQCR10/QCR9, UQCR11/QCR10 and a cleavage product of UQCRFS1). This cytochrome bc1 complex then forms a dimer. It depends on heme b as a cofactor.

The protein resides in the mitochondrion inner membrane. Its function is as follows. Component of the ubiquinol-cytochrome c reductase complex (complex III or cytochrome b-c1 complex) that is part of the mitochondrial respiratory chain. The b-c1 complex mediates electron transfer from ubiquinol to cytochrome c. Contributes to the generation of a proton gradient across the mitochondrial membrane that is then used for ATP synthesis. The polypeptide is Cytochrome b (MT-CYB) (Lepilemur randrianasoloi (Randrianasoli's sportive lemur)).